The primary structure comprises 170 residues: Peptide deformylase 1 (170 aa).

The Fe cation site is built by C91 and H133. E134 is a catalytic residue. Fe cation is bound at residue H137.

Belongs to the polypeptide deformylase family. It depends on Fe(2+) as a cofactor.

It carries out the reaction N-terminal N-formyl-L-methionyl-[peptide] + H2O = N-terminal L-methionyl-[peptide] + formate. In terms of biological role, removes the formyl group from the N-terminal Met of newly synthesized proteins. Requires at least a dipeptide for an efficient rate of reaction. N-terminal L-methionine is a prerequisite for activity but the enzyme has broad specificity at other positions. This chain is Peptide deformylase 1, found in Vibrio vulnificus (strain CMCP6).